Consider the following 486-residue polypeptide: Arginine/agmatine antiporter (486 aa).

12 helical membrane-spanning segments follow: residues 12 to 32, 41 to 61, 85 to 105, 129 to 149, 160 to 180, 211 to 231, 242 to 262, 296 to 316, 341 to 361, 367 to 387, 418 to 438, and 461 to 481; these read LGAI…GIFS, AGAG…FFIA, GFGP…QIFG, NTIP…FIVL, IIGT…TAFA, STML…VMSA, ATLL…ILPF, VGLL…VAEI, LSLY…YFST, MLSI…AFLF, LWLI…LLAL, and EVTK…LFST.

It belongs to the amino acid-polyamine-organocation (APC) superfamily. Basic amino acid/polyamine antiporter (APA) (TC 2.A.3.2) family.

The protein localises to the cell inner membrane. In terms of biological role, catalyzes the exchange of L-arginine for agmatine. The arginine uptake by the bacterium in the macrophage may be a virulence factor against the host innate immune response. This Chlamydia caviae (strain ATCC VR-813 / DSM 19441 / 03DC25 / GPIC) (Chlamydophila caviae) protein is Arginine/agmatine antiporter (aaxC).